A 56-amino-acid chain; its full sequence is Botcinic acid biosynthesis cluster B protein 14 (56 aa).

The protein operates within polyketide biosynthesis. In terms of biological role, part of the gene cluster B that mediates the biosynthesis of botcinic acid and its botcinin derivatives, acetate-derived polyketides that contribute to virulence when combined with the sesquiterpene botrydial. Botcinic acid and its derivatives have been shown to induce chlorosis and necrosis during host plant infection, but also have antifungal activities. Two polyketide synthases, BOA6 and BOA9, are involved in the biosynthesis of botcinins. BOA6 mediates the formation of the per-methylated tetraketide core by condensation of four units of malonyl-CoA with one unit of acetyl-CoA, which would be methylated in activated methylene groups to yield a bicyclic acid intermediate that could then either be converted to botrylactone derivatives or lose the starter acetate unit through a retro-Claisen type C-C bond cleavage to yield botcinin derivatives. The second polyketide synthase, BOA9, is probably required for the biosynthesis of the tetraketide side chain of botcinins. The methyltransferase (MT) domain within BOA6 is probably responsible for the incorporation of four methyl groups. The trans-enoyl reductase BOA5 might take over the enoyl reductase function of BOA6 that misses an ER domain. The monooxygenases BOA2, BOA3 and BOA4 might be involved in further hydroxylations at C4, C5 and C8, whereas BOA7, close to BOA9, could potentially be involved in the hydroxylation at C4 in the side chain of botcinins. In Botryotinia fuckeliana (strain B05.10) (Noble rot fungus), this protein is Botcinic acid biosynthesis cluster B protein 14.